The chain runs to 213 residues: Superoxide dismutase [Mn] (213 aa).

Mn(2+) is bound by residues His-27, His-82, Asp-168, and His-172.

This sequence belongs to the iron/manganese superoxide dismutase family. In terms of assembly, homodimer.

It catalyses the reaction 2 superoxide + 2 H(+) = H2O2 + O2. With respect to regulation, inhibited by hydrogen peroxide. Its function is as follows. Destroys superoxide anion radicals which are normally produced within the cells and which are toxic to biological systems. The chain is Superoxide dismutase [Mn] (sodA) from Haemophilus ducreyi (strain 35000HP / ATCC 700724).